The primary structure comprises 925 residues: Coronin-7 (925 aa).

WD repeat units lie at residues 75 to 115 (CHSD…QALP), 124 to 163 (PEDLPVEVLQFHPTSDGILVSAAGTTVKVWDAAKQQPLTE), 166 to 205 (AHGDLVQSAVWSRDGALVGTACKDKQLRIFDPRTKPRASQ), and 209 to 253 (AHEN…SALA). A disordered region spans residues 419-461 (VGDADASEGFSSPPSSLTSPSTPSSLGPSLSSTSGIGTSPSLR). Residues 429 to 460 (SSPPSSLTSPSTPSSLGPSLSSTSGIGTSPSL) are compositionally biased toward low complexity. Residues Ser-462 and Ser-465 each carry the phosphoserine modification. Lys-472 participates in a covalent cross-link: Glycyl lysine isopeptide (Lys-Gly) (interchain with G-Cter in ubiquitin). WD repeat units follow at residues 542–582 (QNGA…LEEV), 592–632 (GHTE…DRLK), and 635–674 (GHQDQIFSLAWSPDGQQLATVCKDGRVRVYRPRSGPEPLQ). Lys-680 is covalently cross-linked (Glycyl lysine isopeptide (Lys-Gly) (interchain with G-Cter in ubiquitin)). Residues 728 to 768 (DVAPSTLLPSYDPDTGLVLLTGKGDTRVFLYELLPESPFFL) form a WD 8 repeat. The tract at residues 858 to 925 (QPPDMSPVSQ…FEGVDEDEWD (68 aa)) is disordered. Residues 866–882 (SQAPREAPARRAPSSAQ) show a composition bias toward low complexity. Positions 884–896 (LEEKSDQQKKEEL) are enriched in basic and acidic residues. At Ser-915 the chain carries Phosphoserine.

The protein belongs to the WD repeat coronin family. As to quaternary structure, interacts with clathrin adapter AP1 complex. This interaction takes place at Golgi membranes and not AP1-positive endosomal membranes. Interacts (when ubiquitinated at Lys-472) with EPS15. The membrane-associated form is phosphorylated on tyrosine residues. Post-translationally, ubiquitinated via 'Lys-33'-linked ubiquitin chains by the BCR(KLHL20) E3 ubiquitin ligase complex: 'Lys-33'-linked ubiquitination promotes interaction with EPS15 and facilitates actin polymerization at the trans-Golgi network, thereby facilitating post-Golgi trafficking. Deubiquitinated by ZRANB1/TRABID. In terms of tissue distribution, widely expressed. Expressed in the spleen, peripheral leukocytes, testes, brain, thymus and small intestine.

The protein localises to the golgi apparatus membrane. Its subcellular location is the golgi apparatus. It localises to the trans-Golgi network. It is found in the cytoplasmic vesicle. The protein resides in the cytoplasm. The protein localises to the cytosol. Functionally, F-actin regulator involved in anterograde Golgi to endosome transport: upon ubiquitination via 'Lys-33'-linked ubiquitin chains by the BCR(KLHL20) E3 ubiquitin ligase complex, interacts with EPS15 and localizes to the trans-Golgi network, where it promotes actin polymerization, thereby facilitating post-Golgi trafficking. May play a role in the maintenance of the Golgi apparatus morphology. This is Coronin-7 (CORO7) from Homo sapiens (Human).